A 710-amino-acid chain; its full sequence is Polyribonucleotide nucleotidyltransferase (710 aa).

Residues Asp487 and Asp493 each contribute to the Mg(2+) site. In terms of domain architecture, KH spans 554–613; the sequence is PRIEVMNIPVDKIREVIGSGGKVIREIVEKTGAKINIEDDGTVKIASSSGKEIEAARKWI. The 69-residue stretch at 623–691 folds into the S1 motif domain; that stretch reads GQIYEGTVVK…ERGKVRLSMK (69 aa).

This sequence belongs to the polyribonucleotide nucleotidyltransferase family. It depends on Mg(2+) as a cofactor.

It localises to the cytoplasm. It catalyses the reaction RNA(n+1) + phosphate = RNA(n) + a ribonucleoside 5'-diphosphate. In terms of biological role, involved in mRNA degradation. Catalyzes the phosphorolysis of single-stranded polyribonucleotides processively in the 3'- to 5'-direction. This chain is Polyribonucleotide nucleotidyltransferase, found in Rhizobium rhizogenes (strain K84 / ATCC BAA-868) (Agrobacterium radiobacter).